The following is a 271-amino-acid chain: MGVGKEVSFKESFFLSHGNPAMLADESFIARNFLLGWKKNVFPVKPKSILVVSAHWETDVPCVSAGQYPNVIYDFTEVPASMFQMKYPAPGCPKLAKRVQELLIAGGFKSAKLDEERGFDHSSWVPLSMMCPEADIPVCQLSVQPGLDATHHFNVGRALAPLKGEGVLFIGSGGAVHPSDDTPHWFDGVAPWAAEFDQWLEDALLEGRYEDVNNYQTKAPEGWKLAHPIPEHFLPLHVAMGAGGEKSKAELIYRTWDHGTLGYASYKFTSI.

Zn(2+) is bound by residues H17, H55, H177, and H232.

The protein belongs to the DODA-type extradiol aromatic ring-opening dioxygenase family. The cofactor is Zn(2+). It depends on Fe(2+) as a cofactor. Expressed only in colored petals and pigmented tissues, absent from green stems and leaves.

The protein resides in the cytoplasm. The catalysed reaction is L-dopa + O2 = 4-(L-alanin-3-yl)-2-hydroxy-cis,cis-muconate 6-semialdehyde + H(+). It functions in the pathway pigment biosynthesis; betalain biosynthesis. Its function is as follows. Opens the cyclic ring of dihydroxy-phenylalanine (DOPA) between carbons 4 and 5, thus producing an unstable seco-DOPA that rearranges nonenzymatically to betalamic acid. The sequence is that of 4,5-DOPA dioxygenase extradiol (DODA) from Portulaca grandiflora (Rose moss).